A 318-amino-acid polypeptide reads, in one-letter code: DNA-directed RNA polymerase subunit alpha (318 aa).

Residues 1-227 (MTQFEIECLD…NLFSPLKTID (227 aa)) form an alpha N-terminal domain (alpha-NTD) region. The tract at residues 241 to 318 (HINQILIEEL…KEKTTKIYNK (78 aa)) is alpha C-terminal domain (alpha-CTD).

Belongs to the RNA polymerase alpha chain family. In terms of assembly, in plastids the minimal PEP RNA polymerase catalytic core is composed of four subunits: alpha, beta, beta', and beta''. When a (nuclear-encoded) sigma factor is associated with the core the holoenzyme is formed, which can initiate transcription.

The protein localises to the plastid. It localises to the chloroplast. The enzyme catalyses RNA(n) + a ribonucleoside 5'-triphosphate = RNA(n+1) + diphosphate. Its function is as follows. DNA-dependent RNA polymerase catalyzes the transcription of DNA into RNA using the four ribonucleoside triphosphates as substrates. The protein is DNA-directed RNA polymerase subunit alpha of Guillardia theta (Cryptophyte).